The chain runs to 307 residues: Junctional adhesion molecule 2A (307 aa).

Residues 1–18 (MLVCVSLLILIHSVPVSP) form the signal peptide. Residues 19–112 (VTVSSRNPKV…EVSAPSDSIS (94 aa)) enclose the Ig-like V-type domain. At 19-226 (VTVSSRNPKV…FQTHDLNVAA (208 aa)) the chain is on the extracellular side. 2 disulfide bridges follow: Cys-40/Cys-102 and Cys-147/Cys-197. The Ig-like C2-type domain occupies 126–225 (PQTPSCDVPS…TFQTHDLNVA (100 aa)). The chain crosses the membrane as a helical span at residues 227-247 (VVSAVVLVCVILFLCAFGVCL). Topologically, residues 248–307 (AHRQGYFSRHRGRSFWIPHCHGVTHISSQNLNPSEHTQHSGYSHPPKEPQDFKHTQSFML) are cytoplasmic. Residues 278–288 (LNPSEHTQHSG) are compositionally biased toward polar residues. Residues 278–307 (LNPSEHTQHSGYSHPPKEPQDFKHTQSFML) form a disordered region. Residues 292-301 (PPKEPQDFKH) are compositionally biased toward basic and acidic residues.

It belongs to the immunoglobulin superfamily.

Its subcellular location is the cell membrane. It localises to the cell junction. The protein resides in the tight junction. Functionally, junctional adhesion protein that mediates heterotypic cell-cell interactions to regulate different cellular processes. During myogenesis, it is involved in myocyte fusion through the binding of jam3b on neighboring myocytes. This chain is Junctional adhesion molecule 2A (jam2a), found in Danio rerio (Zebrafish).